We begin with the raw amino-acid sequence, 48 residues long: Large ribosomal subunit protein bL34c (48 aa).

The protein belongs to the bacterial ribosomal protein bL34 family.

It is found in the plastid. The protein localises to the chloroplast. The chain is Large ribosomal subunit protein bL34c from Thalassiosira pseudonana (Marine diatom).